A 267-amino-acid chain; its full sequence is Octanoyltransferase (267 aa).

Positions 77 to 265 constitute a BPL/LPL catalytic domain; that stretch reads GTASELVWLV…AFESVFGPRQ (189 aa). Residues 116–123, 196–198, and 209–211 contribute to the substrate site; these read RGGEYTYH, AIG, and GIA. Catalysis depends on Cys-227, which acts as the Acyl-thioester intermediate.

This sequence belongs to the LipB family.

It localises to the cytoplasm. The enzyme catalyses octanoyl-[ACP] + L-lysyl-[protein] = N(6)-octanoyl-L-lysyl-[protein] + holo-[ACP] + H(+). Its pathway is protein modification; protein lipoylation via endogenous pathway; protein N(6)-(lipoyl)lysine from octanoyl-[acyl-carrier-protein]: step 1/2. Its function is as follows. Catalyzes the transfer of endogenously produced octanoic acid from octanoyl-acyl-carrier-protein onto the lipoyl domains of lipoate-dependent enzymes. Lipoyl-ACP can also act as a substrate although octanoyl-ACP is likely to be the physiological substrate. The chain is Octanoyltransferase from Brucella suis biovar 1 (strain 1330).